A 129-amino-acid polypeptide reads, in one-letter code: Small ribosomal subunit protein uS11 (129 aa).

Belongs to the universal ribosomal protein uS11 family. As to quaternary structure, part of the 30S ribosomal subunit. Interacts with proteins S7 and S18. Binds to IF-3.

Its function is as follows. Located on the platform of the 30S subunit, it bridges several disparate RNA helices of the 16S rRNA. Forms part of the Shine-Dalgarno cleft in the 70S ribosome. The sequence is that of Small ribosomal subunit protein uS11 from Haemophilus ducreyi (strain 35000HP / ATCC 700724).